A 595-amino-acid polypeptide reads, in one-letter code: Tyrosine-protein phosphatase cdcA (595 aa).

The tract at residues 32-57 (TPFPYPAEQPKSPSKRRAQASPSKKR) is disordered. The segment covering 44 to 57 (PSKRRAQASPSKKR) has biased composition (basic residues). The Tyrosine-protein phosphatase domain occupies 233 to 381 (LPSTVSEVRS…QGSFREWWFE (149 aa)). Cysteine 322 serves as the catalytic Phosphocysteine intermediate. The tract at residues 392–595 (QPNPVTPGRS…GSPVRVKAQA (204 aa)) is disordered. Over residues 449-461 (RKSHRKDSRHHPY) the composition is skewed to basic residues. Basic and acidic residues predominate over residues 471–483 (VDKDTRKTRRSTD). Over residues 502–526 (SKSPAASPGQRSISYSATVTASYTL) the composition is skewed to polar residues.

Belongs to the protein-tyrosine phosphatase family. Non-receptor class CDC14 subfamily.

Its subcellular location is the nucleus. The protein resides in the cytoplasm. The protein localises to the cell septum. The catalysed reaction is O-phospho-L-tyrosyl-[protein] + H2O = L-tyrosyl-[protein] + phosphate. In terms of biological role, protein phosphatase which antagonizes mitotic cyclin-dependent kinase nimX, the inactivation of which is essential for exit from mitosis. To access its substrates, is released from nucleolar sequestration during mitosis. Plays an essential in coordinating the nuclear division cycle with cytokinesis through the cytokinesis checkpoint. Involved in chromosome segregation, where it is required for meiosis I spindle dissambly as well as for establishing two consecutive chromosome segregation phases. Required for the transcription of the two major endoglucanase genes eglA and eglB and growth on synthetic cellulose as the sole carbon source. In Emericella nidulans (strain FGSC A4 / ATCC 38163 / CBS 112.46 / NRRL 194 / M139) (Aspergillus nidulans), this protein is Tyrosine-protein phosphatase cdcA (cdcA).